The sequence spans 673 residues: eEF1A lysine and N-terminal methyltransferase homolog (673 aa).

The protein belongs to the methyltransferase superfamily.

It catalyses the reaction L-lysyl-[protein] + S-adenosyl-L-methionine = N(6)-methyl-L-lysyl-[protein] + S-adenosyl-L-homocysteine + H(+). The catalysed reaction is N(6)-methyl-L-lysyl-[protein] + S-adenosyl-L-methionine = N(6),N(6)-dimethyl-L-lysyl-[protein] + S-adenosyl-L-homocysteine + H(+). The enzyme catalyses N-terminal glycyl-L-lysyl-L-glutamyl-[protein] + 3 S-adenosyl-L-methionine = N-terminal N,N,N-trimethyl-glycyl-L-lysyl-L-glutamyl-[protein] + 3 S-adenosyl-L-homocysteine + 3 H(+). Dual methyltransferase. It catalyzes N-terminal methylation of target proteins via its C-terminus. It catalyzes dimethylation on lysine residues of target proteins via its N-terminus. In Drosophila melanogaster (Fruit fly), this protein is eEF1A lysine and N-terminal methyltransferase homolog.